A 138-amino-acid polypeptide reads, in one-letter code: MEEEAETEEQQRFSYQQRLKAAVHYTVGCLCEEVALDKEMQFSKQTIAAISELTFRQCENFAKDLEMFARHAKRTTINTEDVKLLARRSNSLLKYITDKSEEIAQINLERKAQKKKKSEDGSKNSRQPAEAGVVESEN.

The residue at position 1 (Met1) is an N-acetylmethionine. The tract at residues 110–138 (RKAQKKKKSEDGSKNSRQPAEAGVVESEN) is disordered.

The protein belongs to the TAF9 family. CENP-S/MHF1 subfamily. In terms of assembly, heterodimer with CENPX, sometimes called MHF; this interaction stabilizes both partners. MHF heterodimers can assemble to form tetrameric structures. MHF also coassemble with CENPT-CENPW heterodimers at centromeres to form the tetrameric CENP-T-W-S-X complex. Forms a discrete complex with FANCM and CENPX, called FANCM-MHF; this interaction, probably mediated by direct binding between CENPS and FANCM, leads to synergistic activation of double-stranded DNA binding and strongly stimulates FANCM-mediated DNA remodeling. Recruited by FANCM to the Fanconi anemia (FA) core complex, which consists of CENPS, CENPX, FANCA, FANCB, FANCC, FANCE, FANCF, FANCG, FANCL, FANCM, FAAP24 and FAAP100. The FA core complex associates with Bloom syndrome (BLM) complex, which consists of at least BLM, DNA topoisomerase 3-alpha (TOP3A), RMI1/BLAP75, RPA1/RPA70 and RPA2/RPA32. The super complex between FA and BLM is called BRAFT. Component of the CENPA-CAD complex, composed of CENPI, CENPK, CENPL, CENPO, CENPP, CENPQ, CENPR and CENPS. The CENPA-CAD complex is probably recruited on centromeres by the CENPA-NAC complex, composed of at least CENPA, CENPC, CENPH, CENPM, CENPN, CENPT and CENPU. As to expression, ubiquitously expressed.

The protein localises to the nucleus. It is found in the chromosome. It localises to the centromere. Its subcellular location is the kinetochore. In terms of biological role, DNA-binding component of the Fanconi anemia (FA) core complex. Required for the normal activation of the FA pathway, leading to monoubiquitination of the FANCI-FANCD2 complex in response to DNA damage, cellular resistance to DNA cross-linking drugs, and prevention of chromosomal breakage. In complex with CENPX (MHF heterodimer), crucial cofactor for FANCM in both binding and ATP-dependent remodeling of DNA. Stabilizes FANCM. In complex with CENPX and FANCM (but not other FANC proteins), rapidly recruited to blocked forks and promotes gene conversion at blocked replication forks. In complex with CENPT, CENPW and CENPX (CENP-T-W-S-X heterotetramer), involved in the formation of a functional kinetochore outer plate, which is essential for kinetochore-microtubule attachment and faithful mitotic progression. As a component of MHF and CENP-T-W-S-X complexes, binds DNA and bends it to form a nucleosome-like structure. DNA-binding function is fulfilled in the presence of CENPX, with the following preference for DNA substates: Holliday junction &gt; double-stranded &gt; splay arm &gt; single-stranded. Does not bind DNA on its own. The chain is Centromere protein S (CENPS) from Homo sapiens (Human).